The sequence spans 140 residues: MALLTVNLNVVSAEESLFSGSIKSLQITGSEGELGIMPGHAPLLTSLKPGMALITKADGTEEVIYLSGGMLEVQPNNVTVLADVATRAADLDEEAALAAKQRAEDNMNAHGGDVDYAAVAAELARAVAQLRVIQATSKHS.

The protein belongs to the ATPase epsilon chain family. As to quaternary structure, F-type ATPases have 2 components, CF(1) - the catalytic core - and CF(0) - the membrane proton channel. CF(1) has five subunits: alpha(3), beta(3), gamma(1), delta(1), epsilon(1). CF(0) has three main subunits: a, b and c.

The protein resides in the cell inner membrane. Its function is as follows. Produces ATP from ADP in the presence of a proton gradient across the membrane. This chain is ATP synthase epsilon chain, found in Colwellia psychrerythraea (strain 34H / ATCC BAA-681) (Vibrio psychroerythus).